A 443-amino-acid polypeptide reads, in one-letter code: Na(+)-translocating NADH-quinone reductase subunit A (443 aa).

The protein belongs to the NqrA family. As to quaternary structure, composed of six subunits; NqrA, NqrB, NqrC, NqrD, NqrE and NqrF.

It carries out the reaction a ubiquinone + n Na(+)(in) + NADH + H(+) = a ubiquinol + n Na(+)(out) + NAD(+). In terms of biological role, NQR complex catalyzes the reduction of ubiquinone-1 to ubiquinol by two successive reactions, coupled with the transport of Na(+) ions from the cytoplasm to the periplasm. NqrA to NqrE are probably involved in the second step, the conversion of ubisemiquinone to ubiquinol. The chain is Na(+)-translocating NADH-quinone reductase subunit A from Mannheimia succiniciproducens (strain KCTC 0769BP / MBEL55E).